Here is a 273-residue protein sequence, read N- to C-terminus: Type IV secretion system protein PtlF homolog (273 aa).

An N-terminal signal peptide occupies residues 1–20; that stretch reads MMAARMMAAGLAATALSAHA.

Belongs to the TrbG/VirB9 family.

It is found in the cell outer membrane. The protein is Type IV secretion system protein PtlF homolog (ptlF) of Bordetella bronchiseptica (strain ATCC BAA-588 / NCTC 13252 / RB50) (Alcaligenes bronchisepticus).